A 132-amino-acid polypeptide reads, in one-letter code: Small ribosomal subunit protein uS11 (132 aa).

Positions 108 to 132 are disordered; the sequence is GRIEDVTPVPHDSCRPKGGRRGRRV.

It belongs to the universal ribosomal protein uS11 family. In terms of assembly, part of the 30S ribosomal subunit.

Its function is as follows. Located on the platform of the 30S subunit. This Methanoregula boonei (strain DSM 21154 / JCM 14090 / 6A8) protein is Small ribosomal subunit protein uS11.